Reading from the N-terminus, the 360-residue chain is Phospho-N-acetylmuramoyl-pentapeptide-transferase (360 aa).

The next 10 membrane-spanning stretches (helical) occupy residues isoleucine 27–tryptophan 47, proline 72–tyrosine 92, serine 94–valine 114, tryptophan 132–glycine 152, isoleucine 168–serine 188, glycine 199–threonine 219, alanine 236–phenylalanine 256, valine 263–leucine 283, phenylalanine 288–valine 308, and valine 338–lysine 358.

Belongs to the glycosyltransferase 4 family. MraY subfamily. Requires Mg(2+) as cofactor.

The protein resides in the cell inner membrane. The catalysed reaction is UDP-N-acetyl-alpha-D-muramoyl-L-alanyl-gamma-D-glutamyl-meso-2,6-diaminopimeloyl-D-alanyl-D-alanine + di-trans,octa-cis-undecaprenyl phosphate = di-trans,octa-cis-undecaprenyl diphospho-N-acetyl-alpha-D-muramoyl-L-alanyl-D-glutamyl-meso-2,6-diaminopimeloyl-D-alanyl-D-alanine + UMP. It functions in the pathway cell wall biogenesis; peptidoglycan biosynthesis. Its function is as follows. Catalyzes the initial step of the lipid cycle reactions in the biosynthesis of the cell wall peptidoglycan: transfers peptidoglycan precursor phospho-MurNAc-pentapeptide from UDP-MurNAc-pentapeptide onto the lipid carrier undecaprenyl phosphate, yielding undecaprenyl-pyrophosphoryl-MurNAc-pentapeptide, known as lipid I. The sequence is that of Phospho-N-acetylmuramoyl-pentapeptide-transferase from Edwardsiella ictaluri (strain 93-146).